Reading from the N-terminus, the 398-residue chain is Probable pectate lyase P56 (398 aa).

An N-terminal signal peptide occupies residues 1 to 27; the sequence is MEYSYRTKINVLFIVLILFVFAALGTA. The N-linked (GlcNAc...) asparagine glycan is linked to asparagine 135. Positions 192, 217, and 221 each coordinate Ca(2+). A glycan (N-linked (GlcNAc...) asparagine) is linked at asparagine 228. Residue arginine 273 is part of the active site.

It belongs to the polysaccharide lyase 1 family. It depends on Ca(2+) as a cofactor. As to expression, expressed in anthers and pollen.

The catalysed reaction is Eliminative cleavage of (1-&gt;4)-alpha-D-galacturonan to give oligosaccharides with 4-deoxy-alpha-D-galact-4-enuronosyl groups at their non-reducing ends.. It functions in the pathway glycan metabolism; pectin degradation; 2-dehydro-3-deoxy-D-gluconate from pectin: step 2/5. In terms of biological role, might be needed during pollen development and tube growth. This Solanum lycopersicum (Tomato) protein is Probable pectate lyase P56 (LAT56).